We begin with the raw amino-acid sequence, 615 residues long: Elongation factor 4 (615 aa).

The tr-type G domain maps to 17 to 198 (ASIRNFCIIA…RVSRTIPAPV (182 aa)). Residues 29–34 (DHGKST) and 145–148 (NKID) contribute to the GTP site.

It belongs to the TRAFAC class translation factor GTPase superfamily. Classic translation factor GTPase family. LepA subfamily.

The protein localises to the cell membrane. The enzyme catalyses GTP + H2O = GDP + phosphate + H(+). Required for accurate and efficient protein synthesis under certain stress conditions. May act as a fidelity factor of the translation reaction, by catalyzing a one-codon backward translocation of tRNAs on improperly translocated ribosomes. Back-translocation proceeds from a post-translocation (POST) complex to a pre-translocation (PRE) complex, thus giving elongation factor G a second chance to translocate the tRNAs correctly. Binds to ribosomes in a GTP-dependent manner. This chain is Elongation factor 4, found in Clavibacter michiganensis subsp. michiganensis (strain NCPPB 382).